We begin with the raw amino-acid sequence, 173 residues long: Protein tyrosine phosphatase type IVA 3 (173 aa).

In terms of domain architecture, Tyrosine-protein phosphatase spans Ala-8–Lys-161. An intrachain disulfide couples Cys-49 to Cys-104. Asp-72 (proton donor) is an active-site residue. Cys-104 functions as the Phosphocysteine intermediate in the catalytic mechanism. Substrate is bound at residue Arg-110. Cys-170 is modified (cysteine methyl ester). Cys-170 carries S-farnesyl cysteine lipidation. Residues Cys-171–Met-173 constitute a propeptide, removed in mature form.

Belongs to the protein-tyrosine phosphatase family. Interacts with tubulin. Farnesylated. Farnesylation is required for membrane targeting. As to expression, mainly expressed in cardiomyocytes and skeletal muscle; also found in pancreas. Consistently overexpressed in colon cancer metastasis.

The protein localises to the cell membrane. It localises to the early endosome. The catalysed reaction is O-phospho-L-tyrosyl-[protein] + H2O = L-tyrosyl-[protein] + phosphate. Its activity is regulated as follows. Inhibited by sodium orthovanadate and peroxovanadium compounds, and by pentamidine. In terms of biological role, protein tyrosine phosphatase which stimulates progression from G1 into S phase during mitosis. Enhances cell proliferation, cell motility and invasive activity, and promotes cancer metastasis. May be involved in the progression of cardiac hypertrophy by inhibiting intracellular calcium mobilization in response to angiotensin II. In Homo sapiens (Human), this protein is Protein tyrosine phosphatase type IVA 3 (PTP4A3).